Consider the following 514-residue polypeptide: 2,3-bisphosphoglycerate-independent phosphoglycerate mutase (514 aa).

Mn(2+) contacts are provided by aspartate 14 and serine 64. Serine 64 serves as the catalytic Phosphoserine intermediate. Substrate-binding positions include histidine 125, 155 to 156 (RD), arginine 187, arginine 193, 263 to 266 (RADR), and lysine 336. Residues aspartate 403, histidine 407, aspartate 444, histidine 445, and histidine 463 each coordinate Mn(2+).

This sequence belongs to the BPG-independent phosphoglycerate mutase family. Monomer. Mn(2+) serves as cofactor.

It carries out the reaction (2R)-2-phosphoglycerate = (2R)-3-phosphoglycerate. It functions in the pathway carbohydrate degradation; glycolysis; pyruvate from D-glyceraldehyde 3-phosphate: step 3/5. In terms of biological role, catalyzes the interconversion of 2-phosphoglycerate and 3-phosphoglycerate. The sequence is that of 2,3-bisphosphoglycerate-independent phosphoglycerate mutase from Salmonella typhi.